The sequence spans 176 residues: Peptide deformylase 1 (176 aa).

Fe cation-binding residues include Cys-99 and His-141. The active site involves Glu-142. A Fe cation-binding site is contributed by His-145.

Belongs to the polypeptide deformylase family. Fe(2+) serves as cofactor.

The catalysed reaction is N-terminal N-formyl-L-methionyl-[peptide] + H2O = N-terminal L-methionyl-[peptide] + formate. Removes the formyl group from the N-terminal Met of newly synthesized proteins. Requires at least a dipeptide for an efficient rate of reaction. N-terminal L-methionine is a prerequisite for activity but the enzyme has broad specificity at other positions. This is Peptide deformylase 1 from Bordetella pertussis (strain Tohama I / ATCC BAA-589 / NCTC 13251).